Here is a 1374-residue protein sequence, read N- to C-terminus: MRPLRDDAKRRADRQLSASMKPTSSNRPFSDRVPDRFKDGDDAQFDFTAPPRGMGSRDGNVHYMQQSLFSMIAAVGSKSDFHARFDESSDSDGEMEEQPRVEQTTGKASSRTPPVPSLDPRQPSKRSEPSKLVLEERGRRHQRACSDNKLLQRLPKSDAEGGVNESSNQSDSLLKVPPLRRTRSATPRAAPVLSRMVEAQSHFDLTSATPYLPPNNPDKSMEDQPQSSASALSMRLMKMFEFAKPEKVLVEYACSLLQSMLLQGYMYVTEGHICFYAYLPKKSNVAIKSGYLSKRGRKNPKYHRYWFALKGDVLSYYADPSNLYFPSGHVDLRYGISASLTERKDGDAKDFQVTTDQRTYLFRADSATSAKEWVKALQQVIFRTHNEGDSVKVSFPIANVIDLEESPMADFAETFKIRVIDSGETYAIDEYFFSFFDSGQDAFNYIKGLVNAVSTTTATKEAQDQHDIKHQPESSRTAYKRQSVSSVRVSDQRREDSPRKRSSSVGNENQGSADSFAEQGTGSSPIIQSMTDTTESASQILHRSDVFQAPTMRTLQGRSLDVGESIRRYSDDTTPSASARLDLDAAVGSPCGTLGHNETTEDARYATGQSDLMQSSRPSSVTQLNELVKAGVYPLQRAAGFAEYLKSRSKQMSTLLATESMGYIEKVSGMWIGGQKHYGEREGPLLEDQNVDPEDNEGSFNYGDRFRAHFALPPTEKLQATYYAYLHRVLPLYGKIYISQKKLCFRSLIPGTRTKMILPFKDIENVEKEKGFRFGYHGLVVIIRGHEELFFEFNASDSRDDCAVTLHQNLESVKFLVESGLLAEDERDEVEAAKAEHRMLEEARLDSPEGHDAPPTLTEDSSEIHPFFDDPRASIINFKPPEPLRITCLTIGSRGDVQPYIALCKGLLAEGHKPKIATHAEFEPWIRKHGIDFAPVDGDPAELMRICVENGMFTYSFLREASLKFRGWIDDLLSSAWIGCQGSDLLIESPSAMAGIHIAEALRIPYFRGFTMPWTRTRAYPHAFAVPENRMGGAYNYITYVMFDNIFWKAIAGQVNRWRNNELGLKATTLDKMQQNKVPFLYNYSPSVVAPPLDYPDWIRITGYWFLNEGTDWTPPTELSNFIAQARSDGKKLVYIGFGSIVVSDPSALTRTVIESVLKADVRCILSKGWSDRLGDPASTKTEIPLPPEILQIQSAPHDWLFSQIDAAAHHGGAGTTGASLRAGVPTIVKPFFGDQFFFGSRVEDLGVGICMKKLNVSVFSRALWEATHSERMIVKARNLGIQIRNEDGVATAIQALYRDLEYAKTLARQKSLASSTPFSPTPTAKASPDGGDDDLDDIEEWTFVGDETGFDIAKRMRERAASDADRIGSNMFQ.

A compositionally biased stretch (basic and acidic residues) spans 1–14 (MRPLRDDAKRRADR). Disordered stretches follow at residues 1–60 (MRPL…RDGN), 83–190 (ARFD…PRAA), and 206–227 (TSATPYLPPNNPDKSMEDQPQS). Residues 16-28 (LSASMKPTSSNRP) are compositionally biased toward polar residues. Residues 29 to 41 (FSDRVPDRFKDGD) are compositionally biased toward basic and acidic residues. The span at 101-112 (VEQTTGKASSRT) shows a compositional bias: polar residues. The span at 125-138 (KRSEPSKLVLEERG) shows a compositional bias: basic and acidic residues. Residues 234-283 (MRLMKMFEFAKPEKVLVEYACSLLQSMLLQGYMYVTEGHICFYAYLPKKS) enclose the GRAM 1 domain. In terms of domain architecture, PH spans 285 to 382 (VAIKSGYLSK…WVKALQQVIF (98 aa)). Residues 458-538 (ATKEAQDQHD…SMTDTTESAS (81 aa)) form a disordered region. Composition is skewed to basic and acidic residues over residues 461–473 (EAQDQHDIKHQPE) and 490–499 (SDQRREDSPR). Positions 503–538 (SSVGNENQGSADSFAEQGTGSSPIIQSMTDTTESAS) are enriched in polar residues. Positions 704–770 (DRFRAHFALP…KDIENVEKEK (67 aa)) constitute a GRAM 2 domain. UDP-alpha-D-glucose is bound by residues serine 893, arginine 894, aspartate 896, alanine 1196, histidine 1198, histidine 1211, glycine 1215, threonine 1216, aspartate 1235, and glutamine 1236. A compositionally biased stretch (polar residues) spans 1314–1325 (ASSTPFSPTPTA). Residues 1314-1338 (ASSTPFSPTPTAKASPDGGDDDLDD) are disordered.

This sequence belongs to the glycosyltransferase 28 family.

It localises to the cytoplasm. It is found in the preautophagosomal structure membrane. It catalyses the reaction a sterol + UDP-alpha-D-glucose = a sterol 3-beta-D-glucoside + UDP + H(+). The enzyme catalyses ergosterol + UDP-alpha-D-glucose = ergosteryl 3-beta-D-glucoside + UDP + H(+). Its function is as follows. Sterol glycosyltransferase responsible for the glycosylation of ergosterol to form ergosterol-glucoside. The chain is Sterol 3-beta-glucosyltransferase from Penicillium rubens (strain ATCC 28089 / DSM 1075 / NRRL 1951 / Wisconsin 54-1255) (Penicillium chrysogenum).